Reading from the N-terminus, the 833-residue chain is Leucine--tRNA ligase (833 aa).

The 'HIGH' region motif lies at Pro41 to His52. The short motif at Lys610–Ser614 is the 'KMSKS' region element. Lys613 serves as a coordination point for ATP.

It belongs to the class-I aminoacyl-tRNA synthetase family.

It localises to the cytoplasm. The catalysed reaction is tRNA(Leu) + L-leucine + ATP = L-leucyl-tRNA(Leu) + AMP + diphosphate. The chain is Leucine--tRNA ligase from Streptococcus pyogenes serotype M18 (strain MGAS8232).